The following is a 439-amino-acid chain: Ribosomal protein uS12 methylthiotransferase RimO (439 aa).

An MTTase N-terminal domain is found at 7–119; the sequence is KQLCLISLGC…IDIMIAKKQN (113 aa). C16, C50, C82, C151, C155, and C158 together coordinate [4Fe-4S] cluster. The Radical SAM core domain occupies 137–368; the sequence is TGSSVHAYVK…ALKHQNHSFK (232 aa).

It belongs to the methylthiotransferase family. RimO subfamily. [4Fe-4S] cluster serves as cofactor.

It is found in the cytoplasm. It carries out the reaction L-aspartate(89)-[ribosomal protein uS12]-hydrogen + (sulfur carrier)-SH + AH2 + 2 S-adenosyl-L-methionine = 3-methylsulfanyl-L-aspartate(89)-[ribosomal protein uS12]-hydrogen + (sulfur carrier)-H + 5'-deoxyadenosine + L-methionine + A + S-adenosyl-L-homocysteine + 2 H(+). Catalyzes the methylthiolation of an aspartic acid residue of ribosomal protein uS12. The polypeptide is Ribosomal protein uS12 methylthiotransferase RimO (Helicobacter pylori (strain G27)).